The following is a 384-amino-acid chain: 1-deoxy-D-xylulose 5-phosphate reductoisomerase (384 aa).

NADPH contacts are provided by Thr10, Gly11, Ser12, Ile13, Asn38, and Asn120. Lys121 serves as a coordination point for 1-deoxy-D-xylulose 5-phosphate. Residue Glu122 coordinates NADPH. Asp146 contacts Mn(2+). 1-deoxy-D-xylulose 5-phosphate-binding residues include Ser147, Glu148, Ser172, and His195. Glu148 serves as a coordination point for Mn(2+). An NADPH-binding site is contributed by Gly201. 4 residues coordinate 1-deoxy-D-xylulose 5-phosphate: Ser208, Asn213, Lys214, and Glu217. Position 217 (Glu217) interacts with Mn(2+).

It belongs to the DXR family. Mg(2+) serves as cofactor. Mn(2+) is required as a cofactor.

It catalyses the reaction 2-C-methyl-D-erythritol 4-phosphate + NADP(+) = 1-deoxy-D-xylulose 5-phosphate + NADPH + H(+). The protein operates within isoprenoid biosynthesis; isopentenyl diphosphate biosynthesis via DXP pathway; isopentenyl diphosphate from 1-deoxy-D-xylulose 5-phosphate: step 1/6. Catalyzes the NADPH-dependent rearrangement and reduction of 1-deoxy-D-xylulose-5-phosphate (DXP) to 2-C-methyl-D-erythritol 4-phosphate (MEP). The sequence is that of 1-deoxy-D-xylulose 5-phosphate reductoisomerase from Protochlamydia amoebophila (strain UWE25).